The sequence spans 390 residues: GTPase Obg (390 aa).

The region spanning methionine 1–leucine 159 is the Obg domain. The disordered stretch occupies residues asparagine 127–glycine 147. The segment covering arginine 129–threonine 145 has biased composition (polar residues). Residues alanine 160–isoleucine 333 form the OBG-type G domain. GTP contacts are provided by residues glycine 166–serine 173, phenylalanine 191–valine 195, aspartate 213–glycine 216, asparagine 283–aspartate 286, and serine 314–alanine 316. Positions 173 and 193 each coordinate Mg(2+).

It belongs to the TRAFAC class OBG-HflX-like GTPase superfamily. OBG GTPase family. In terms of assembly, monomer. Mg(2+) serves as cofactor.

Its subcellular location is the cytoplasm. Functionally, an essential GTPase which binds GTP, GDP and possibly (p)ppGpp with moderate affinity, with high nucleotide exchange rates and a fairly low GTP hydrolysis rate. Plays a role in control of the cell cycle, stress response, ribosome biogenesis and in those bacteria that undergo differentiation, in morphogenesis control. The protein is GTPase Obg of Salmonella paratyphi A (strain ATCC 9150 / SARB42).